The sequence spans 179 residues: MARLKDVYQNEVVQKLRAEFNYKNIMEVPRIEKVVINMGLGEAIQNVKILDSAASELGKITGQKAVITKAKKSIASFKLREGMPIGCMVTLRRERMYEFLDRLMNVALARVRDFKGVSGKAFDGQGNYTLGIKEQLIFPEINYDEIDKIKGLNVTIVTSAKNDEEGKALLKHMGMPFRN.

It belongs to the universal ribosomal protein uL5 family. As to quaternary structure, part of the 50S ribosomal subunit; part of the 5S rRNA/L5/L18/L25 subcomplex. Contacts the 5S rRNA and the P site tRNA. Forms a bridge to the 30S subunit in the 70S ribosome.

In terms of biological role, this is one of the proteins that bind and probably mediate the attachment of the 5S RNA into the large ribosomal subunit, where it forms part of the central protuberance. In the 70S ribosome it contacts protein S13 of the 30S subunit (bridge B1b), connecting the 2 subunits; this bridge is implicated in subunit movement. Contacts the P site tRNA; the 5S rRNA and some of its associated proteins might help stabilize positioning of ribosome-bound tRNAs. The protein is Large ribosomal subunit protein uL5 of Trichlorobacter lovleyi (strain ATCC BAA-1151 / DSM 17278 / SZ) (Geobacter lovleyi).